The sequence spans 396 residues: Elongation factor Tu (396 aa).

The tr-type G domain occupies 10–205; that stretch reads KPHVNIGTIG…AVDESIPDPV (196 aa). Residues 19 to 26 are G1; it reads GHVDHGKT. Residue 19-26 participates in GTP binding; that stretch reads GHVDHGKT. Threonine 26 serves as a coordination point for Mg(2+). A G2 region spans residues 62-66; sequence GITIN. A G3 region spans residues 83–86; it reads DAPG. GTP is bound by residues 83–87 and 138–141; these read DAPGH and NKSD. The G4 stretch occupies residues 138 to 141; the sequence is NKSD. Positions 175–177 are G5; that stretch reads SAL.

It belongs to the TRAFAC class translation factor GTPase superfamily. Classic translation factor GTPase family. EF-Tu/EF-1A subfamily. Monomer.

The protein localises to the cytoplasm. The catalysed reaction is GTP + H2O = GDP + phosphate + H(+). Its function is as follows. GTP hydrolase that promotes the GTP-dependent binding of aminoacyl-tRNA to the A-site of ribosomes during protein biosynthesis. This is Elongation factor Tu from Mycobacterium marinum (strain ATCC BAA-535 / M).